The primary structure comprises 219 residues: Thiamine-phosphate synthase (219 aa).

Residues 44 to 48 (QLREK) and Asn79 each bind 4-amino-2-methyl-5-(diphosphooxymethyl)pyrimidine. Asp80 and Asp99 together coordinate Mg(2+). Ser117 is a binding site for 4-amino-2-methyl-5-(diphosphooxymethyl)pyrimidine. Position 143 to 145 (143 to 145 (TST)) interacts with 2-[(2R,5Z)-2-carboxy-4-methylthiazol-5(2H)-ylidene]ethyl phosphate. 4-amino-2-methyl-5-(diphosphooxymethyl)pyrimidine is bound at residue Lys146. 2-[(2R,5Z)-2-carboxy-4-methylthiazol-5(2H)-ylidene]ethyl phosphate is bound by residues Gly175 and 195–196 (IS).

It belongs to the thiamine-phosphate synthase family. It depends on Mg(2+) as a cofactor.

The catalysed reaction is 2-[(2R,5Z)-2-carboxy-4-methylthiazol-5(2H)-ylidene]ethyl phosphate + 4-amino-2-methyl-5-(diphosphooxymethyl)pyrimidine + 2 H(+) = thiamine phosphate + CO2 + diphosphate. It catalyses the reaction 2-(2-carboxy-4-methylthiazol-5-yl)ethyl phosphate + 4-amino-2-methyl-5-(diphosphooxymethyl)pyrimidine + 2 H(+) = thiamine phosphate + CO2 + diphosphate. The enzyme catalyses 4-methyl-5-(2-phosphooxyethyl)-thiazole + 4-amino-2-methyl-5-(diphosphooxymethyl)pyrimidine + H(+) = thiamine phosphate + diphosphate. Its pathway is cofactor biosynthesis; thiamine diphosphate biosynthesis; thiamine phosphate from 4-amino-2-methyl-5-diphosphomethylpyrimidine and 4-methyl-5-(2-phosphoethyl)-thiazole: step 1/1. Its function is as follows. Condenses 4-methyl-5-(beta-hydroxyethyl)thiazole monophosphate (THZ-P) and 2-methyl-4-amino-5-hydroxymethyl pyrimidine pyrophosphate (HMP-PP) to form thiamine monophosphate (TMP). This chain is Thiamine-phosphate synthase, found in Bacillus mycoides (strain KBAB4) (Bacillus weihenstephanensis).